Here is a 477-residue protein sequence, read N- to C-terminus: MWMFSWLCAILIILAIAGMNTIAKTTPHTKFTKKSEEREMPKGLKPSSGPPPEEEETLFTEMAEMAEPITKPSALDSVFGTATLSPFENFTLDPADFFLNCCDCCSPVPGQKGEPGETGQPGPKGEAGNLGIPGPPGVVGPQGPRGYKGEKGLKGERGDQGVPGYPGKPGAQGEPGPKGDKGNIGLGGVKGQKGSKGDTCGNCTKGEKGDQGAMGSPGLHGGPGAKGEKGEMGEKGEMGDKGCCGDSGERGGKGQKGEGGMKGEKGSKGDSGMEGKSGRNGLPGAKGDPGIKGEKGELGPPGLLGPTGPKGDIGNKGVRGPTGKKGSRGFKGSKGELARVPRSAFSAGLSKPFPPPNIPIKFEKILYNDQGNYSPVTGKFNCSIPGTYVFSYHITVRGRPARISLVAQNKKQFKSRETLYGQEIDQASLLVILKLSAGDQVWLEVSKDWNGVYVSAEDDSIFTGFLLYPEETSGISP.

The signal sequence occupies residues 1–23; the sequence is MWMFSWLCAILIILAIAGMNTIA. 2 disordered regions span residues 28 to 55 and 111 to 337; these read HTKF…PEEE and QKGE…KGEL. The span at 33 to 42 shows a compositional bias: basic and acidic residues; it reads KKSEEREMPK. The 60-residue stretch at 116 to 175 folds into the Collagen-like 1 domain; the sequence is GETGQPGPKGEAGNLGIPGPPGVVGPQGPRGYKGEKGLKGERGDQGVPGYPGKPGAQGEP. A hydroxyproline mark is found at Pro-133 and Pro-136. Basic and acidic residues predominate over residues 147-159; sequence YKGEKGLKGERGD. Residues Pro-163, Pro-166, and Pro-169 each carry the hydroxyproline modification. Lys-178 carries the 5-hydroxylysine modification. O-linked (Gal...) hydroxylysine glycosylation is present at Lys-178. Gly residues predominate over residues 182-191; sequence GNIGLGGVKG. The N-linked (GlcNAc...) asparagine glycan is linked to Asn-202. 2 Collagen-like domains span residues 209–268 and 278–337; these read GDQG…KGSK and GRNG…KGEL. The residue at position 223 (Pro-223) is a Hydroxyproline. 2 stretches are compositionally biased toward basic and acidic residues: residues 226–240 and 247–277; these read KGEK…EMGD and SGER…EGKS. Residues Pro-283 and Pro-301 each carry the hydroxyproline modification. A compositionally biased stretch (low complexity) spans 298-310; sequence LGPPGLLGPTGPK. A 5-hydroxylysine modification is found at Lys-310. The O-linked (Gal...) hydroxylysine glycan is linked to Lys-310. Residues 338–473 enclose the C1q domain; the sequence is ARVPRSAFSA…GFLLYPEETS (136 aa). Asn-381 carries N-linked (GlcNAc...) asparagine glycosylation.

The protein belongs to the OTOL1 family. In terms of assembly, homooligomer; disulfide-linked; probably forms homotrimers. Interacts with OC90. Interacts with CBLN1.

The protein localises to the secreted. It localises to the extracellular space. The protein resides in the extracellular matrix. In terms of biological role, collagen-like protein specifically expressed in the inner ear, which provides an organic scaffold for otoconia, a calcium carbonate structure in the saccule and utricle of the ear. Acts as a scaffold for biomineralization: sequesters calcium and forms interconnecting fibrils between otoconia that are incorporated into the calcium crystal structure. Together with OC90, modulates calcite crystal morphology and growth kinetics. This is Otolin-1 from Homo sapiens (Human).